A 207-amino-acid polypeptide reads, in one-letter code: Small ribosomal subunit protein eS1 (207 aa).

The protein belongs to the eukaryotic ribosomal protein eS1 family.

The polypeptide is Small ribosomal subunit protein eS1 (Methanosarcina barkeri (strain Fusaro / DSM 804)).